The primary structure comprises 475 residues: Deoxyguanosinetriphosphate triphosphohydrolase-like protein (475 aa).

Residues 118–272 enclose the HD domain; sequence RLTHTLEVAQ…MDLSDDIAYS (155 aa).

Belongs to the dGTPase family. Type 2 subfamily.

The polypeptide is Deoxyguanosinetriphosphate triphosphohydrolase-like protein (dgt) (Bifidobacterium longum (strain NCC 2705)).